Consider the following 536-residue polypeptide: Arylsulfatase (536 aa).

Aspartate 13, aspartate 14, and cysteine 51 together coordinate Ca(2+). Cysteine 51 functions as the Nucleophile in the catalytic mechanism. Position 51 is a 3-oxoalanine (Cys) (cysteine 51). Histidine 115 is a catalytic residue. Aspartate 317 and asparagine 318 together coordinate Ca(2+).

It belongs to the sulfatase family. Monomer. It depends on Ca(2+) as a cofactor. Post-translationally, the conversion to 3-oxoalanine (also known as C-formylglycine, FGly), of a serine or cysteine residue in prokaryotes and of a cysteine residue in eukaryotes, is critical for catalytic activity.

It localises to the cytoplasm. The catalysed reaction is an aryl sulfate + H2O = a phenol + sulfate + H(+). Functionally, hydrolyzes the bond between sulfate and the aromatic ring in a compound such as 4-nitrocatechol sulfate. The polypeptide is Arylsulfatase (atsA) (Pseudomonas aeruginosa (strain ATCC 15692 / DSM 22644 / CIP 104116 / JCM 14847 / LMG 12228 / 1C / PRS 101 / PAO1)).